Reading from the N-terminus, the 263-residue chain is Hydroxyacylglutathione hydrolase (263 aa).

Zn(2+) contacts are provided by histidine 55, histidine 57, aspartate 59, histidine 60, histidine 117, aspartate 134, and histidine 172.

The protein belongs to the metallo-beta-lactamase superfamily. Glyoxalase II family. In terms of assembly, monomer. Requires Zn(2+) as cofactor.

The enzyme catalyses an S-(2-hydroxyacyl)glutathione + H2O = a 2-hydroxy carboxylate + glutathione + H(+). The protein operates within secondary metabolite metabolism; methylglyoxal degradation; (R)-lactate from methylglyoxal: step 2/2. In terms of biological role, thiolesterase that catalyzes the hydrolysis of S-D-lactoyl-glutathione to form glutathione and D-lactic acid. The sequence is that of Hydroxyacylglutathione hydrolase from Shewanella baltica (strain OS223).